Consider the following 258-residue polypeptide: MRASKTPILINGSPWLLDFRRRSSREFDWEIAEHLEVPEAYFQAYDPLTTWFEWFSRIGYRDYTDAEAEIERDAEENVRQHQVSVQPDLTLTQRLSSEGSIQLPVPFLKTADQFCILSSLLYAGFGVVETRKFHGDTIFLKNVPSVGARHGIEAYVSLDDGRYYYDCEQHRLFSAGYRGDLRSGQIDIVFRPEVYMWRYQTAACLADVYLDLGHILGTLSMVASLYDTSITSRSAEAAPVDLINAVHLQRIAVDGFNP.

In terms of biological role, the actions of the proteins TfxB, TfxD and TfxF are implicated in the processing of the inactive trifolitoxin (TfxA) precursor into the active peptide. The sequence is that of Trifolitoxin-processing protein TfxF (tfxF) from Rhizobium leguminosarum bv. trifolii.